A 457-amino-acid chain; its full sequence is NADH-quinone oxidoreductase subunit N (457 aa).

Helical transmembrane passes span N2–L22, L25–F45, N60–F80, G92–S112, M114–S134, F149–A169, F188–F208, F222–M242, Y253–A273, L283–I303, F310–V330, A353–F373, V382–V402, and V431–L451.

The protein belongs to the complex I subunit 2 family. As to quaternary structure, NDH-1 is composed of 14 different subunits. Subunits NuoA, H, J, K, L, M, N constitute the membrane sector of the complex.

Its subcellular location is the cell inner membrane. The enzyme catalyses a quinone + NADH + 5 H(+)(in) = a quinol + NAD(+) + 4 H(+)(out). Its function is as follows. NDH-1 shuttles electrons from NADH, via FMN and iron-sulfur (Fe-S) centers, to quinones in the respiratory chain. The immediate electron acceptor for the enzyme in this species is believed to be a menaquinone. Couples the redox reaction to proton translocation (for every two electrons transferred, four hydrogen ions are translocated across the cytoplasmic membrane), and thus conserves the redox energy in a proton gradient. The protein is NADH-quinone oxidoreductase subunit N of Cytophaga hutchinsonii (strain ATCC 33406 / DSM 1761 / CIP 103989 / NBRC 15051 / NCIMB 9469 / D465).